Reading from the N-terminus, the 267-residue chain is NAD kinase (267 aa).

Catalysis depends on D52, which acts as the Proton acceptor. Residues 52–53, R57, 121–122, R132, K150, D152, 163–168, and A187 each bind NAD(+); these read DG, NE, and TAYSLS.

It belongs to the NAD kinase family. Requires a divalent metal cation as cofactor.

The protein resides in the cytoplasm. It catalyses the reaction NAD(+) + ATP = ADP + NADP(+) + H(+). Functionally, involved in the regulation of the intracellular balance of NAD and NADP, and is a key enzyme in the biosynthesis of NADP. Catalyzes specifically the phosphorylation on 2'-hydroxyl of the adenosine moiety of NAD to yield NADP. In Fusobacterium nucleatum subsp. nucleatum (strain ATCC 25586 / DSM 15643 / BCRC 10681 / CIP 101130 / JCM 8532 / KCTC 2640 / LMG 13131 / VPI 4355), this protein is NAD kinase.